A 283-amino-acid polypeptide reads, in one-letter code: 4-hydroxybenzoate octaprenyltransferase (283 aa).

9 helical membrane passes run 16–36 (PIGT…AGAG), 40–60 (LRIV…GCVI), 85–105 (ISAT…FGLV), 108–128 (LNTE…LYPF), 135–155 (LPQI…FTAL), 160–180 (WFIA…YDTE), 204–224 (FDRL…GWIL), 226–246 (LITV…LFAY), and 263–283 (FLHN…HYWF).

The protein belongs to the UbiA prenyltransferase family. The cofactor is Mg(2+).

The protein localises to the cell inner membrane. The enzyme catalyses all-trans-octaprenyl diphosphate + 4-hydroxybenzoate = 4-hydroxy-3-(all-trans-octaprenyl)benzoate + diphosphate. The protein operates within cofactor biosynthesis; ubiquinone biosynthesis. Functionally, catalyzes the prenylation of para-hydroxybenzoate (PHB) with an all-trans polyprenyl group. Mediates the second step in the final reaction sequence of ubiquinone-8 (UQ-8) biosynthesis, which is the condensation of the polyisoprenoid side chain with PHB, generating the first membrane-bound Q intermediate 3-octaprenyl-4-hydroxybenzoate. The chain is 4-hydroxybenzoate octaprenyltransferase from Idiomarina loihiensis (strain ATCC BAA-735 / DSM 15497 / L2-TR).